The chain runs to 358 residues: Heme A synthase (358 aa).

A run of 8 helical transmembrane segments spans residues 22–42 (IQVWLYTILLLCFAIVLVGGA), 107–127 (VLGRFVGLVALLGLVLFWVTK), 133–153 (IFLQLLTVPILIAMQGIIGWW), 172–192 (LAIHLIAACLVIIFVTYLSRG), 208–228 (FAGWLVFLILVEIYFGALVAG), 269–289 (FVHRCFSYFLFITAVIHALYV), 302–322 (AIFLCIMIVMQAFLGIITLLH), and 324–344 (VPISLGLIHQGGALVVLCFSV). A heme-binding site is contributed by His-271. Residue His-332 participates in heme binding.

It belongs to the COX15/CtaA family. Type 2 subfamily. Interacts with CtaB. The cofactor is heme b.

The protein resides in the cell membrane. The catalysed reaction is Fe(II)-heme o + 2 A + H2O = Fe(II)-heme a + 2 AH2. The protein operates within porphyrin-containing compound metabolism; heme A biosynthesis; heme A from heme O: step 1/1. In terms of biological role, catalyzes the conversion of heme O to heme A by two successive hydroxylations of the methyl group at C8. The first hydroxylation forms heme I, the second hydroxylation results in an unstable dihydroxymethyl group, which spontaneously dehydrates, resulting in the formyl group of heme A. The polypeptide is Heme A synthase (Bartonella bacilliformis (strain ATCC 35685 / KC583 / Herrer 020/F12,63)).